A 438-amino-acid chain; its full sequence is UPF0229 protein Smed_1028 (438 aa).

The segment at 55–107 (PARGVNEPAFQPDSNSGERRHVLPGNREFAAGDRIPKRGGGGGAGNAGAGTGQ) is disordered. Positions 92–105 (RGGGGGAGNAGAGT) are enriched in gly residues.

This sequence belongs to the UPF0229 family.

The sequence is that of UPF0229 protein Smed_1028 from Sinorhizobium medicae (strain WSM419) (Ensifer medicae).